We begin with the raw amino-acid sequence, 470 residues long: uncharacterized protein (470 aa).

Residues 1 to 24 (MKKLVGSLAAISVLSATGFSYVGY) form the signal peptide.

This is an uncharacterized protein from Mycoplasma capricolum subsp. capricolum (strain California kid / ATCC 27343 / NCTC 10154).